Consider the following 363-residue polypeptide: Holliday junction branch migration complex subunit RuvB (363 aa).

Positions 1–23 (MHKDEDQRLLGPAPLPNDPDRSL) are disordered. The large ATPase domain (RuvB-L) stretch occupies residues 1-184 (MHKDEDQRLL…FGIPIRLNFY (184 aa)). Residues L23, R24, G65, K68, T69, T70, 131–133 (EDY), R174, Y184, and R221 contribute to the ATP site. T69 is a Mg(2+) binding site. The interval 185 to 255 (TIEELEYIVQ…IADEALSRLE (71 aa)) is small ATPAse domain (RuvB-S). The interval 258–363 (HLGLDPLDRR…QTTLWDGEDD (106 aa)) is head domain (RuvB-H). R294, R313, and R318 together coordinate DNA.

This sequence belongs to the RuvB family. Homohexamer. Forms an RuvA(8)-RuvB(12)-Holliday junction (HJ) complex. HJ DNA is sandwiched between 2 RuvA tetramers; dsDNA enters through RuvA and exits via RuvB. An RuvB hexamer assembles on each DNA strand where it exits the tetramer. Each RuvB hexamer is contacted by two RuvA subunits (via domain III) on 2 adjacent RuvB subunits; this complex drives branch migration. In the full resolvosome a probable DNA-RuvA(4)-RuvB(12)-RuvC(2) complex forms which resolves the HJ.

The protein resides in the cytoplasm. It catalyses the reaction ATP + H2O = ADP + phosphate + H(+). The RuvA-RuvB-RuvC complex processes Holliday junction (HJ) DNA during genetic recombination and DNA repair, while the RuvA-RuvB complex plays an important role in the rescue of blocked DNA replication forks via replication fork reversal (RFR). RuvA specifically binds to HJ cruciform DNA, conferring on it an open structure. The RuvB hexamer acts as an ATP-dependent pump, pulling dsDNA into and through the RuvAB complex. RuvB forms 2 homohexamers on either side of HJ DNA bound by 1 or 2 RuvA tetramers; 4 subunits per hexamer contact DNA at a time. Coordinated motions by a converter formed by DNA-disengaged RuvB subunits stimulates ATP hydrolysis and nucleotide exchange. Immobilization of the converter enables RuvB to convert the ATP-contained energy into a lever motion, pulling 2 nucleotides of DNA out of the RuvA tetramer per ATP hydrolyzed, thus driving DNA branch migration. The RuvB motors rotate together with the DNA substrate, which together with the progressing nucleotide cycle form the mechanistic basis for DNA recombination by continuous HJ branch migration. Branch migration allows RuvC to scan DNA until it finds its consensus sequence, where it cleaves and resolves cruciform DNA. In Bartonella tribocorum (strain CIP 105476 / IBS 506), this protein is Holliday junction branch migration complex subunit RuvB.